The primary structure comprises 122 residues: Modulator protein MzrA (122 aa).

The Cytoplasmic portion of the chain corresponds to 1-10; it reads MKILTRIPRR. A helical membrane pass occupies residues 11–31; that stretch reads LLPWLLGGALALVAVSFAPAL. At 32–122 the chain is on the periplasmic side; sequence LSHETVVQIR…NQDANRSIYS (91 aa).

This sequence belongs to the MzrA family. As to quaternary structure, interacts with EnvZ.

The protein localises to the cell inner membrane. Functionally, modulates the activity of the EnvZ/OmpR two-component regulatory system, probably by directly modulating EnvZ enzymatic activity and increasing stability of phosphorylated OmpR. The chain is Modulator protein MzrA from Pantoea sp. (strain At-9b).